The following is a 450-amino-acid chain: tRNA-2-methylthio-N(6)-dimethylallyladenosine synthase (450 aa).

The MTTase N-terminal domain maps to 14 to 132; it reads GEFFIETWGC…FPNYLNEVKK (119 aa). [4Fe-4S] cluster-binding residues include Cys23, Cys59, Cys93, Cys169, Cys173, and Cys176. A Radical SAM core domain is found at 155–385; sequence RKNSMKAFVT…VEVLNEISAK (231 aa). Residues 388 to 450 enclose the TRAM domain; it reads KAYEGKIEEV…NSFSLTGEEI (63 aa).

This sequence belongs to the methylthiotransferase family. MiaB subfamily. Monomer. [4Fe-4S] cluster serves as cofactor.

It is found in the cytoplasm. The catalysed reaction is N(6)-dimethylallyladenosine(37) in tRNA + (sulfur carrier)-SH + AH2 + 2 S-adenosyl-L-methionine = 2-methylsulfanyl-N(6)-dimethylallyladenosine(37) in tRNA + (sulfur carrier)-H + 5'-deoxyadenosine + L-methionine + A + S-adenosyl-L-homocysteine + 2 H(+). Functionally, catalyzes the methylthiolation of N6-(dimethylallyl)adenosine (i(6)A), leading to the formation of 2-methylthio-N6-(dimethylallyl)adenosine (ms(2)i(6)A) at position 37 in tRNAs that read codons beginning with uridine. The protein is tRNA-2-methylthio-N(6)-dimethylallyladenosine synthase of Clostridium botulinum (strain ATCC 19397 / Type A).